The primary structure comprises 434 residues: Pectate lyase (434 aa).

Positions 1 to 22 (MKAAQFFLYSLLFFASAALSSA) are cleaved as a signal peptide. Residues Asn-68 and Asn-97 are each glycosylated (N-linked (GlcNAc...) asparagine). Ca(2+)-binding residues include Asp-232, Asp-256, and Asp-260. Arg-312 is an active-site residue.

It belongs to the polysaccharide lyase 1 family. The cofactor is Ca(2+).

It carries out the reaction Eliminative cleavage of (1-&gt;4)-alpha-D-galacturonan to give oligosaccharides with 4-deoxy-alpha-D-galact-4-enuronosyl groups at their non-reducing ends.. The protein operates within glycan metabolism; pectin degradation; 2-dehydro-3-deoxy-D-gluconate from pectin: step 2/5. In Lilium longiflorum (Trumpet lily), this protein is Pectate lyase.